We begin with the raw amino-acid sequence, 197 residues long: Phosphoheptose isomerase (197 aa).

The SIS domain maps to 37–197 (MLQCLMNDGK…CIDSVLLEGM (161 aa)). Residue 52–54 (NGG) coordinates substrate. Positions 61 and 65 each coordinate Zn(2+). Residues E65, 94–95 (ND), 120–122 (STS), S125, and Q175 contribute to the substrate site. Residues Q175 and H183 each coordinate Zn(2+).

It belongs to the SIS family. GmhA subfamily. As to quaternary structure, homotetramer. Requires Zn(2+) as cofactor.

It localises to the cytoplasm. It carries out the reaction 2 D-sedoheptulose 7-phosphate = D-glycero-alpha-D-manno-heptose 7-phosphate + D-glycero-beta-D-manno-heptose 7-phosphate. The protein operates within carbohydrate biosynthesis; D-glycero-D-manno-heptose 7-phosphate biosynthesis; D-glycero-alpha-D-manno-heptose 7-phosphate and D-glycero-beta-D-manno-heptose 7-phosphate from sedoheptulose 7-phosphate: step 1/1. Catalyzes the isomerization of sedoheptulose 7-phosphate in D-glycero-D-manno-heptose 7-phosphate. In Neisseria gonorrhoeae (strain ATCC 700825 / FA 1090), this protein is Phosphoheptose isomerase.